A 917-amino-acid polypeptide reads, in one-letter code: Gamma-tubulin complex component 3 (917 aa).

The protein belongs to the TUBGCP family. In terms of assembly, gamma-tubulin small complex (Gamma TuSC) is a heterotetrameric complex which contains two molecules of gamma-tubulin, and one molecule each of Dgrip84 and Dgrip91. The gamma-tubulin in this complex binds preferentially to GDP over GTP.

The protein localises to the cytoplasm. The protein resides in the cytoskeleton. It is found in the microtubule organizing center. Its subcellular location is the centrosome. It localises to the perinuclear region. This chain is Gamma-tubulin complex component 3, found in Drosophila melanogaster (Fruit fly).